Reading from the N-terminus, the 109-residue chain is Trafficking protein particle complex subunit 2-like protein (109 aa).

This sequence belongs to the TRAPP small subunits family. Sedlin subfamily. In terms of assembly, component of the multisubunit TRAPP (transport protein particle) complex, which includes at least TRAPPC2, TRAPPC2L, TRAPPC3, TRAPPC3L, TRAPPC4, TRAPPC5, TRAPPC8, TRAPPC9, TRAPPC10, TRAPPC11 and TRAPPC12. Interacts with the heterodimer TRAPPC3-TRAPPC6A.

Its subcellular location is the cytoplasm. It localises to the perinuclear region. It is found in the endoplasmic reticulum. The protein resides in the golgi apparatus. May play a role in vesicular transport from endoplasmic reticulum to Golgi. This Pongo abelii (Sumatran orangutan) protein is Trafficking protein particle complex subunit 2-like protein (TRAPPC2L).